The sequence spans 373 residues: Dof zinc finger protein 3 (373 aa).

The tract at residues 1–23 (MASGGALSPVEEKPTVVKTTKAE) is disordered. Residues 10-23 (VEEKPTVVKTTKAE) are compositionally biased toward basic and acidic residues. Residues 45–99 (PCCPRCNSIKTKFCYYNNYSMAQPRYFCRECRRYWTQGGSLRNVPVGGGCRKSKR) form a Dof-type zinc finger. Positions 47, 50, 72, and 75 each coordinate Zn(2+). Positions 297–327 (ALGGADEQQGGGDGGEAVMTKDTGGGASSSA) are disordered.

In terms of assembly, interacts with RISBZ1/BZIP58.

It is found in the nucleus. In terms of biological role, transcriptional activator that binds specifically to the DNA consensus core sequence 5'-AAAG-3' also known as prolamin box. Can activate the expression of genes encoding for the seed storage proteins glutelin, prolamin and globulin. Functions synergistically with RISBZ/BZIP58 to positively regulate quantitatively many seed storage proteins. Functions synergistically with RISBZ1/BZIP58 to positively regulate some metabolic enzymes, such as alanine aminotransferase and pyruvate phosphate dikinase, that are expressed in developing seeds. Functions synergistically with RISBZ1/BZIP58 to positively regulate genes that are key players in the development of aleurone layers. Functions synergistically with RISBZ1/BZIP58 to positively regulate the glutelin GLUD-1 gene in endosperm of developing seeds. Can activate the expression of the bifunctional lysine-degrading enzyme, lysine ketoglutarate reductase/saccharopine dehydrogenase (LKR/SDH), one of the key regulators determining free lysine content in plants. In germinating seeds, involved in the gibberellin-mediated activation of the alpha-amylase AMY1.1/AMY1A gene. The chain is Dof zinc finger protein 3 from Oryza sativa subsp. japonica (Rice).